The sequence spans 231 residues: Large ribosomal subunit protein uL1 (231 aa).

Belongs to the universal ribosomal protein uL1 family. As to quaternary structure, part of the 50S ribosomal subunit.

Binds directly to 23S rRNA. The L1 stalk is quite mobile in the ribosome, and is involved in E site tRNA release. Functionally, protein L1 is also a translational repressor protein, it controls the translation of the L11 operon by binding to its mRNA. The protein is Large ribosomal subunit protein uL1 of Janthinobacterium sp. (strain Marseille) (Minibacterium massiliensis).